Reading from the N-terminus, the 328-residue chain is LOB domain-containing protein 27 (328 aa).

One can recognise an LOB domain in the interval 35–136 (GACAACKYQR…EELKAVNSQL (102 aa)).

The protein belongs to the LOB domain-containing protein family.

The chain is LOB domain-containing protein 27 (LBD27) from Arabidopsis thaliana (Mouse-ear cress).